Here is a 614-residue protein sequence, read N- to C-terminus: MDRKVAVHEDGYPVVSWVPEEGEMMDQKGKDQVKDRGQWTNKMEFVLSVAGEIIGLGNVWRFPYLCYKNGGGAFFIPYFIFFFSCGIPVFFLEVALGQYSSQGSVTAWRKICPLLQGIGMASVVIESYLNIYYIIILAWALFYLFSSFTWELPWTTCTNSWNTEHCVDFLNHSSARGVSSSENFTSPVMEFWERRVLGITSGIHDLGSLRWELALCLLLAWIICYFCIWKGVKSTGKVVYFTATFPYLMLIILLIRGVTLPGAYQGIVFYLKPDLLRLKDPQVWMDAGTQIFFSFAICQGCLTALGSYNKYHNNCYRDSIALCFLNSATSFVAGFVVFSILGFMSQEQGIPISEVAESGPGLAFIAFPKAVTMMPLSQLWSCLFFIMLLFLGLDSQFVCMECLVTASMDMFPQQLRKSGRRDVLILAISVLCYLMGLLLVTEGGMYIFQLFDYYASSGICLLFLSLFEVICIGWVYGADRFYDNVEDMIGYRPWPLVKISWLFLTPGLCLATFFFSLSKYTPLKYNNVYMYPSWGYSIGWLLAFSSMACVPLFIIITFLKTQGSFKKRLRRLITPDPSLPQPGRRPPQDGSSAQNCSSSPAKQELIAWEKETHL.

Residues 1-44 (MDRKVAVHEDGYPVVSWVPEEGEMMDQKGKDQVKDRGQWTNKME) lie on the Cytoplasmic side of the membrane. Helical transmembrane passes span 45–65 (FVLS…FPYL), 73–92 (AFFI…VFFL), and 117–137 (GIGM…IIIL). The Extracellular portion of the chain corresponds to 138 to 210 (AWALFYLFSS…SGIHDLGSLR (73 aa)). Cys-157 and Cys-166 are disulfide-bonded. N-linked (GlcNAc...) asparagine glycans are attached at residues Asn-171 and Asn-183. The next 9 helical transmembrane spans lie at 211–229 (WELA…FCIW), 238–255 (VVYF…ILLI), 291–308 (IFFS…LGSY), 320–341 (IALC…FSIL), 374–393 (MPLS…FLGL), 423–441 (VLIL…LLVT), 458–478 (GICL…VYGA), 499–518 (ISWL…FSLS), and 538–556 (IGWL…FIII). The Cytoplasmic segment spans residues 557 to 614 (TFLKTQGSFKKRLRRLITPDPSLPQPGRRPPQDGSSAQNCSSSPAKQELIAWEKETHL). The interval 574 to 602 (TPDPSLPQPGRRPPQDGSSAQNCSSSPAK) is disordered. The segment covering 589 to 601 (DGSSAQNCSSSPA) has biased composition (polar residues).

This sequence belongs to the sodium:neurotransmitter symporter (SNF) (TC 2.A.22) family. SLC6A12 subfamily. As to quaternary structure, interacts with LIN7C. Predominantly expressed in the liver (sinusoidal hepatocyte plasma membranes), also present in the renal medulla, where it localizes to the basolateral membranes of collecting ducts (particularly at the papilla tip) and the thick ascending limbs of Henle (at protein level). Some expression is detected in the leptomeninges, but no expression is detected in brain parenchyma, brain blood vessels, ependymal cells, the renal cortex and the intestine.

Its subcellular location is the basolateral cell membrane. It is found in the cell membrane. The enzyme catalyses 4-aminobutanoate(out) + chloride(out) + 3 Na(+)(out) = 4-aminobutanoate(in) + chloride(in) + 3 Na(+)(in). The catalysed reaction is glycine betaine(out) + 2 chloride(out) + 3 Na(+)(out) = glycine betaine(in) + 2 chloride(in) + 3 Na(+)(in). Transporter that mediates cellular uptake of betaine and GABA in a sodium- and chloride-dependent process. May have a role in regulation of GABAergic transmission in the brain through the reuptake of GABA into presynaptic terminals, as well as in osmotic regulation. Probably also involved in renal and hepatic osmotic regulation. The chain is Sodium- and chloride-dependent betaine transporter (Slc6a12) from Mus musculus (Mouse).